A 199-amino-acid polypeptide reads, in one-letter code: MKSSLWVSLAVSLIGLGPAAARNDYPGNYPSSSPPLGPTDWERTPVSVFAKVLNTQPDPDYNLLKELVTYDCTYISLTFDNPTLHGIMPWAGTHTHVGPQAFIDIFTRVGLYWDRGPFSIDHIFGDDGNVTAWGSFTATSRTLGKTVISPWAARARVNSANQIFEFQWMEDTFTTASSFGSDNSTKVFIANPEGGTAHA.

Positions 1–21 (MKSSLWVSLAVSLIGLGPAAA) are cleaved as a signal peptide. Residues asparagine 129 and asparagine 183 are each glycosylated (N-linked (GlcNAc...) asparagine).

It belongs to the patF family.

It localises to the cytoplasm. It is found in the cytosol. It catalyses the reaction phyllostine = neopatulin. It functions in the pathway mycotoxin biosynthesis; patulin biosynthesis. Its function is as follows. Part of the gene cluster that mediates the biosynthesis of patulin, an acetate-derived tetraketide mycotoxin produced by several fungal species that shows antimicrobial properties against several bacteria. PatF catalyzes the conversion of phyllostine into neopatulin. The pathway begins with the synthesis of 6-methylsalicylic acid by the polyketide synthase (PKS) patK via condensation of acetate and malonate units. The 6-methylsalicylic acid decarboxylase patG then catalyzes the decarboxylation of 6-methylsalicylic acid to yield m-cresol (also known as 3-methylphenol). These first reactions occur in the cytosol. The intermediate m-cresol is then transported into the endoplasmic reticulum where the cytochrome P450 monooxygenase patH converts it to m-hydroxybenzyl alcohol, which is further converted to gentisyl alcohol by the cytochrome P450 monooxygenase patI. The oxidoreductases patJ and patO further convert gentisyl alcohol to isoepoxydon in the vacuole. PatN catalyzes then the transformation of isoepoxydon into phyllostine. The cluster protein patF is responsible for the conversion from phyllostine to neopatulin whereas the alcohol dehydrogenase patD converts neopatulin to E-ascladiol. The steps between isoepoxydon and E-ascladiol occur in the cytosol, and E-ascladiol is probably secreted to the extracellular space by one of the cluster-specific transporters patC or patM. Finally, the secreted patulin synthase patE catalyzes the conversion of E-ascladiol to patulin. This Penicillium expansum (Blue mold rot fungus) protein is Patulin biosynthesis cluster protein F.